Consider the following 142-residue polypeptide: Transcriptional regulator MraZ (142 aa).

SpoVT-AbrB domains lie at 5 to 47 (EFQH…PQHE) and 76 to 119 (ATEC…SKEE).

This sequence belongs to the MraZ family. In terms of assembly, forms oligomers.

It is found in the cytoplasm. The protein localises to the nucleoid. The protein is Transcriptional regulator MraZ of Desulforamulus reducens (strain ATCC BAA-1160 / DSM 100696 / MI-1) (Desulfotomaculum reducens).